The primary structure comprises 167 residues: Ribosome maturation factor RimM (167 aa).

The region spanning 94–167 is the PRC barrel domain; sequence EENEYFIKDL…VMVVHLLEGL (74 aa).

It belongs to the RimM family. Binds ribosomal protein uS19.

It is found in the cytoplasm. In terms of biological role, an accessory protein needed during the final step in the assembly of 30S ribosomal subunit, possibly for assembly of the head region. Essential for efficient processing of 16S rRNA. May be needed both before and after RbfA during the maturation of 16S rRNA. It has affinity for free ribosomal 30S subunits but not for 70S ribosomes. In Thermoanaerobacter pseudethanolicus (strain ATCC 33223 / 39E) (Clostridium thermohydrosulfuricum), this protein is Ribosome maturation factor RimM.